Consider the following 507-residue polypeptide: Histidine ammonia-lyase (507 aa).

A cross-link (5-imidazolinone (Ala-Gly)) is located at residues 141–143; it reads ASG. Residue serine 142 is modified to 2,3-didehydroalanine (Ser).

Belongs to the PAL/histidase family. In terms of processing, contains an active site 4-methylidene-imidazol-5-one (MIO), which is formed autocatalytically by cyclization and dehydration of residues Ala-Ser-Gly.

It localises to the cytoplasm. It catalyses the reaction L-histidine = trans-urocanate + NH4(+). It participates in amino-acid degradation; L-histidine degradation into L-glutamate; N-formimidoyl-L-glutamate from L-histidine: step 1/3. The polypeptide is Histidine ammonia-lyase (Burkholderia lata (strain ATCC 17760 / DSM 23089 / LMG 22485 / NCIMB 9086 / R18194 / 383)).